A 951-amino-acid polypeptide reads, in one-letter code: Metal transporter CNNM1 (951 aa).

The chain crosses the membrane as a helical span at residues 23-43 (AVLLLFFSLSPRPPAAAAWLL). Residues 114-138 (GAGGAAPSAVPTRPPGPQRCREQSD) form a disordered region. Positions 218–414 (LLPPAWLRAL…DPYSDLVKEE (197 aa)) constitute a CNNM transmembrane domain. The next 3 helical transmembrane spans lie at 222-242 (AWLR…FSGL), 282-302 (LLCT…GWLY), and 319-339 (AGVH…FLGA). CBS domains lie at 433 to 495 (LTPL…CTPL) and 502 to 568 (YNRP…ILDE). Composition is skewed to polar residues over residues 731–740 (SRCSGLNRSE) and 814–824 (KAPTTRGTPQT). Disordered stretches follow at residues 731-754 (SRCS…GSNT) and 795-830 (MDSS…DDPV). A phosphothreonine mark is found at Thr-821 and Thr-824. At Ser-850 the chain carries Phosphoserine. The tract at residues 903-951 (DPEASPCSSDSEENMGKKLLRTLSGRKRKKSADGERASEENSNLTPLIT) is disordered. Over residues 920-932 (KLLRTLSGRKRKK) the composition is skewed to basic residues. Over residues 942–951 (ENSNLTPLIT) the composition is skewed to polar residues.

The protein belongs to the ACDP family. Predominantly expressed in brain and testis, and, at lower levels, in kidney. In the brain, expressed in hippocampal neurons (at protein level).

The protein localises to the cell membrane. In terms of biological role, probable metal transporter. This is Metal transporter CNNM1 (Cnnm1) from Mus musculus (Mouse).